The chain runs to 334 residues: 7,8-didemethyl-8-hydroxy-5-deazariboflavin synthase (334 aa).

In terms of domain architecture, Radical SAM core spans 2–248 (VSYSKNVFVP…PDVPVQVPPN (247 aa)). Cys16, Cys20, and Cys23 together coordinate [4Fe-4S] cluster.

This sequence belongs to the radical SAM superfamily. CofG family. As to quaternary structure, consists of two subunits, CofG and CofH. Requires [4Fe-4S] cluster as cofactor.

The catalysed reaction is 5-amino-5-(4-hydroxybenzyl)-6-(D-ribitylimino)-5,6-dihydrouracil + S-adenosyl-L-methionine = 7,8-didemethyl-8-hydroxy-5-deazariboflavin + 5'-deoxyadenosine + L-methionine + NH4(+) + H(+). The protein operates within cofactor biosynthesis; coenzyme F0 biosynthesis. Functionally, catalyzes the radical-mediated synthesis of 7,8-didemethyl-8-hydroxy-5-deazariboflavin from 5-amino-5-(4-hydroxybenzyl)-6-(D-ribitylimino)-5,6-dihydrouracil. The polypeptide is 7,8-didemethyl-8-hydroxy-5-deazariboflavin synthase (Methanopyrus kandleri (strain AV19 / DSM 6324 / JCM 9639 / NBRC 100938)).